A 244-amino-acid polypeptide reads, in one-letter code: Carbonic anhydrase (244 aa).

The N-terminal stretch at 1-19 (MKGKLSIALMLSVCFSASA) is a signal peptide. The region spanning 23-244 (VHWGYEGNGD…QPLNGRIIIH (222 aa)) is the Alpha-carbonic anhydrase domain. Cysteine 46 and cysteine 199 are oxidised to a cystine. The active-site Proton acceptor is the histidine 84. Residues histidine 109, histidine 111, and histidine 128 each coordinate Zn(2+). 195–196 (TT) is a binding site for substrate.

The protein belongs to the alpha-carbonic anhydrase family. The cofactor is Zn(2+).

It is found in the periplasm. The enzyme catalyses hydrogencarbonate + H(+) = CO2 + H2O. In terms of biological role, reversible hydration of carbon dioxide. This Pectobacterium carotovorum (Erwinia carotovora) protein is Carbonic anhydrase (cah).